Consider the following 816-residue polypeptide: Auxin response factor 12 (816 aa).

A compositionally biased stretch (low complexity) spans 1 to 10; that stretch reads MSSSSAASIG. The tract at residues 1–24 is disordered; that stretch reads MSSSSAASIGPPQPPPPPAPPEEE. Positions 11–20 are enriched in pro residues; the sequence is PPQPPPPPAP. Positions 135–237 form a DNA-binding region, TF-B3; it reads FCKTLTASDT…QLLLGIRRAS (103 aa). The segment at 526 to 565 is disordered; the sequence is NDQKQKIQPDQSYQVPTSAVLPSPTSLPSHLREKFGFSDP. Positions 717 to 801 constitute a PB1 domain; sequence RTFVKVYKSG…WYIKILSPED (85 aa).

The protein belongs to the ARF family. As to quaternary structure, homodimers and heterodimers.

Its subcellular location is the nucleus. Its function is as follows. Auxin response factors (ARFs) are transcriptional factors that bind specifically to the DNA sequence 5'-TGTCTC-3' found in the auxin-responsive promoter elements (AuxREs). The polypeptide is Auxin response factor 12 (ARF12) (Oryza sativa subsp. indica (Rice)).